A 528-amino-acid polypeptide reads, in one-letter code: CTD kinase subunit alpha (528 aa).

The segment covering 1–15 (MSYNNGNTYSKSYSR) has biased composition (polar residues). The disordered stretch occupies residues 1–148 (MSYNNGNTYS…NTSNDIKNGY (148 aa)). Position 14 is a phosphoserine; by autocatalysis (S14). The short motif at 37–44 (PPKRIRTD) is the Nuclear localization signal element. Positions 45-103 (SGYQSNMDNISSHRVNSNDQPGHTKSRGNNNLSRYNDTSFQTSSRYQGSRYNNNNTSYE) are enriched in polar residues. The segment covering 104 to 118 (NRPKSIKRDETKAEF) has biased composition (basic and acidic residues). A compositionally biased stretch (polar residues) spans 134–144 (YNNSSNTSNDI). The Protein kinase domain occupies 183-469 (YLRIMQVGEG…ATEALQSDYF (287 aa)). ATP contacts are provided by residues 189–197 (VGEGTYGKV) and K212. Residue D306 is the Proton acceptor of the active site. At T338 the chain carries Phosphothreonine. The disordered stretch occupies residues 497 to 528 (QKRPNILSTNTNNKGNGNSNNNNNNNNDDDDK). The segment covering 504-522 (STNTNNKGNGNSNNNNNNN) has biased composition (low complexity).

Belongs to the protein kinase superfamily. CMGC Ser/Thr protein kinase family. CDC2/CDKX subfamily. As to quaternary structure, CTDK-I consists of three subunits, CTK1, CTK2 and CTK3 (also called alpha, beta and gamma). Interacts directly with the CTK2 and CTK3 subunits, this interaction is required for kinase activity. Interacts with RNA polymerase I. Interacts with SNF1, but only at low glucose concentrations. Interacts with translating ribosomes. In terms of processing, phosphorylated on Thr-338 by CAK1. Phosphorylation is essential for the elevated CTD Ser-2 phosphorylation and required to activate transcription of stationary-phase genes during the diauxic shift.

It localises to the nucleus. Its subcellular location is the nucleolus. The protein localises to the cytoplasm. It carries out the reaction [DNA-directed RNA polymerase] + ATP = phospho-[DNA-directed RNA polymerase] + ADP + H(+). Its function is as follows. Catalytic subunit of the CTDK-I complex, which hyperphosphorylates the C-terminal heptapeptide repeat domain (CTD) of the largest RNA polymerase II subunit. CTDK-I phosphorylates 'Ser-5' if the CTD substrate is not phosphorylated at 'Ser-5', but will phosphorylate 'Ser-2' of a CTD substrate if 'Ser-5' is already phosphorylated. CTDK-I is also more reactive toward substrates that are prephosphorylated at 'Ser-2' or 'Ser-5' compared with an unphosphorylated CTD substrate, therefore efficiently creating doubly phosphorylated CTD repeats. Involved in RNA polymerase II transcriptional elongation, and through PTI1, pre-mRNA 3'-end processing. Participates in both positive and negative regulation of CTD phosphorylation. Required for DNA damage induced transcription, including the expression of the RNR genes, and reprogramming of gene expression upon amino acid starvation. Required for SET2 mediated H3K36 methylation. Also regulates H3K4 methylation. Controls the maintenance of suppressive chromatin in the coding regions of genes by both promoting H3K36 methylation, which leads to histone deacetylation, and catalyzing phosphorylation of the CTD required to localize H3K4 chromatin modification specifically to the 5' ends of genes, thereby creating a boundary for H3K4 methylation that prevents a mark associated with transcriptional initiation from spreading into the bodies of genes. Involved in RNA polymerase I transcription. Involved in telomere maintenance. Acts together with SNF1 to induce GSY2 transcription in response to glucose limitation. Involved in the adaptation to alternative carbon sources, including galactose, glycerol and ethanol, but not raffinose. Required for the integrity of the rDNA locus. Functions in translation elongation by enhancing decoding fidelity. Needed for translational accuracy by phosphorylating RPS2. The polypeptide is CTD kinase subunit alpha (CTK1) (Saccharomyces cerevisiae (strain ATCC 204508 / S288c) (Baker's yeast)).